The primary structure comprises 351 residues: MTKISKIIDELNNQQADAAWITTPLNVYYFTGYRSEPHERLFALLIKKDGKQVLFCPKMEVEEVKASSFTGEIVGYLDTENPFSLYPQTINKLLIESEHLTVARQKQLISGFNVNSFGDVDLTIKQLRNIKSEDEISKIRKAAELADKCIEIGVSYLKEGVTEREVVNHIEQTIKQYGVNEMSFDTMVLFGDHAASPHGTPGDRRLKSNEYVLFDLGVIYEHYCSDMTRTIKFGEPNKEAQEIYNIVLEAETSAIQAIKPGIPLKDIDHIARNIISEKGYGEYFPHRLGHGLGLQEHEYQDVSSTNSNLLEAGMVITIEPGIYVPGVAGVRIEDDILVTNEGYEVLTHYEK.

Residues Asp215, Asp226, His290, Glu319, and Glu333 each coordinate Mn(2+).

It belongs to the peptidase M24B family. It depends on Mn(2+) as a cofactor.

This is an uncharacterized protein from Staphylococcus aureus (strain bovine RF122 / ET3-1).